A 220-amino-acid polypeptide reads, in one-letter code: UPF0643 protein PB2B2.08 (220 aa).

This sequence belongs to the UPF0643 family.

It localises to the cytoplasm. The protein resides in the nucleus. This chain is UPF0643 protein PB2B2.08, found in Schizosaccharomyces pombe (strain 972 / ATCC 24843) (Fission yeast).